A 442-amino-acid polypeptide reads, in one-letter code: Protein translocase subunit SecY (442 aa).

10 helical membrane passes run 24-44 (FLFLAIIVYRIGAHIPVPGIN), 76-96 (IFALGIMPYISASIIMQLMTA), 125-145 (VLALVQAIGMSVGLGSQGVAF), 149-169 (FGFYFVAVTTFVAGAMFMMWL), 178-198 (VGNGISMLIFAGIVAGLPRAI), 212-232 (IFALIGVGLLAVAIIAFVVFI), 269-289 (VIPAIFASSILLFPASLGSWF), 312-332 (NILLFTAGIVFFCFFYTALMF), 363-383 (GVLTRLTMFGALYMTAVCLLP), and 385-405 (FLVVAAHVPFYLGGTSLLIVV).

This sequence belongs to the SecY/SEC61-alpha family. Component of the Sec protein translocase complex. Heterotrimer consisting of SecY, SecE and SecG subunits. The heterotrimers can form oligomers, although 1 heterotrimer is thought to be able to translocate proteins. Interacts with the ribosome. Interacts with SecDF, and other proteins may be involved. Interacts with SecA.

The protein localises to the cell inner membrane. In terms of biological role, the central subunit of the protein translocation channel SecYEG. Consists of two halves formed by TMs 1-5 and 6-10. These two domains form a lateral gate at the front which open onto the bilayer between TMs 2 and 7, and are clamped together by SecE at the back. The channel is closed by both a pore ring composed of hydrophobic SecY resides and a short helix (helix 2A) on the extracellular side of the membrane which forms a plug. The plug probably moves laterally to allow the channel to open. The ring and the pore may move independently. The protein is Protein translocase subunit SecY of Pseudomonas aeruginosa (strain ATCC 15692 / DSM 22644 / CIP 104116 / JCM 14847 / LMG 12228 / 1C / PRS 101 / PAO1).